The following is a 245-amino-acid chain: MTFTASSSSCAITESPVVVALDYHERDKALAFVDKIDPRDCRLKVGKEMFTLFGPQLVRDLQQRGFDVFLDLKFHDIPNTTARAVAAAADLGVWMVNVHASGGARMMAAARDALAPFGKDAPLLIAVTVLTSMETSDLHDLGVTLSPAEHAERLARLTQQCGLDGVVCSAQEAVRFKQVFGAAFKLVTPGIRPAGSEAGDQRRIMTPEQALSAGVDYMVIGRPVTQSVDPAQTLKDINASLKREA.

Substrate-binding positions include Asp-22, Lys-44, 71-80 (DLKFHDIPNT), Thr-131, Arg-192, Gln-201, Gly-221, and Arg-222. Lys-73 serves as the catalytic Proton donor.

This sequence belongs to the OMP decarboxylase family. Type 1 subfamily. In terms of assembly, homodimer.

It catalyses the reaction orotidine 5'-phosphate + H(+) = UMP + CO2. Its pathway is pyrimidine metabolism; UMP biosynthesis via de novo pathway; UMP from orotate: step 2/2. Functionally, catalyzes the decarboxylation of orotidine 5'-monophosphate (OMP) to uridine 5'-monophosphate (UMP). This chain is Orotidine 5'-phosphate decarboxylase, found in Salmonella newport (strain SL254).